We begin with the raw amino-acid sequence, 307 residues long: MARRRRGTPIDGVLLLDKAPGVSSNRALQQVRRLYDAQKAGHTGTLDPMATGLLPVCFGEATKFSAYLLDADKTYRTWVRLGEVTDTGDAEGTVIEHHSVPALDERDIEAALAGFRGEVEQVPPMYSALKHQGRPLYELAREGKHVERAARRVTVYDMRLLSCEAEGFELEVRCSKGTYIRTLAEDIGHALGCGAHITSLRRLRSGPFEADAMHAFSALEDLDAASREARLLPVDTMLTHLPSLEVAASASRRLLHGQRAQIDTAGLAAQSTARLYRDAAFLGLVTVTECGEVAPRRLLNTASLASE.

Aspartate 47 functions as the Nucleophile in the catalytic mechanism.

The protein belongs to the pseudouridine synthase TruB family. Type 1 subfamily.

It catalyses the reaction uridine(55) in tRNA = pseudouridine(55) in tRNA. Its function is as follows. Responsible for synthesis of pseudouridine from uracil-55 in the psi GC loop of transfer RNAs. In Chromohalobacter salexigens (strain ATCC BAA-138 / DSM 3043 / CIP 106854 / NCIMB 13768 / 1H11), this protein is tRNA pseudouridine synthase B.